The chain runs to 206 residues: Ras-related protein Rab-18 (206 aa).

The residue at position 1 (M1) is an N-acetylmethionine. Positions 17, 20, 21, 22, 23, 34, 35, 40, 66, 123, and 125 each coordinate GTP. S22 contributes to the Mg(2+) binding site. 2 consecutive short sequence motifs (switch) follow at residues 31 to 45 and 63 to 80; these read DTFDPELAATIGVDF and DTAGQERFRTLTPSYYRG. T40 serves as a coordination point for Mg(2+). A Phosphoserine modification is found at S144. Residue A152 coordinates GTP. C199 carries S-palmitoyl cysteine lipidation. C203 carries the post-translational modification Cysteine methyl ester. C203 carries the S-geranylgeranyl cysteine lipid modification. The propeptide at 204-206 is removed in mature form; it reads SVL.

Belongs to the small GTPase superfamily. Rab family. As to quaternary structure, interacts (in GTP-bound form) with ZFYVE1. Interacts with ZW10 and this interaction is enhanced in the presence of ZFYVE1. Interacts with BSCL2. Mg(2+) is required as a cofactor.

It localises to the endoplasmic reticulum membrane. It is found in the golgi apparatus. The protein resides in the cis-Golgi network membrane. The protein localises to the lipid droplet. Its subcellular location is the apical cell membrane. It catalyses the reaction GTP + H2O = GDP + phosphate + H(+). With respect to regulation, regulated by guanine nucleotide exchange factors (GEFs) which promote the exchange of bound GDP for free GTP. Regulated by GTPase activating proteins (GAPs) which increase the GTP hydrolysis activity at the ER membrane. Inhibited by GDP dissociation inhibitors (GDIs) which prevent Rab-GDP dissociation. In terms of biological role, the small GTPases Rab are key regulators of intracellular membrane trafficking, from the formation of transport vesicles to their fusion with membranes. Rabs cycle between an inactive GDP-bound form and an active GTP-bound form that is able to recruit to membranes different sets of downstream effectors directly responsible for vesicle formation, movement, tethering and fusion. RAB18 is required for the localization of ZFYVE1 to lipid droplets and for its function in mediating the formation of endoplasmic reticulum-lipid droplets (ER-LD) contacts. Also required for maintaining endoplasmic reticulum structure. Plays a role in apical endocytosis/recycling. Plays a key role in eye and brain development and neurodegeneration. The protein is Ras-related protein Rab-18 (RAB18) of Bos taurus (Bovine).